Here is a 279-residue protein sequence, read N- to C-terminus: uncharacterized protein (279 aa).

Positions 136–279 are disordered; that stretch reads TSNATEASEK…FTSDSSDEED (144 aa). Positions 228 to 238 are enriched in low complexity; that stretch reads NNGNGAVYSDS.

This is an uncharacterized protein from Invertebrate iridescent virus 3 (IIV-3).